The following is a 438-amino-acid chain: (3,5-dihydroxyphenyl)acetyl-CoA 1,2-dioxygenase (438 aa).

Substrate contacts are provided by residues Asp-183, Glu-189, 222–225 (HPRY), 233–238 (AGINLK), Gly-296, 325–327 (IPG), and Gln-416.

This sequence belongs to the enoyl-CoA hydratase/isomerase family. Homohexamer; dimer of trimers.

It carries out the reaction (3,5-dihydroxyphenyl)acetyl-CoA + O2 = 2-(3,5-dihydroxyphenyl)-2-oxoacetate + CoA + H(+). With respect to regulation, inhibited by DPA-S-(N-acetylcysteamine). Involved in the biosynthesis of the nonproteinogenic amino acid monomer (S)-3,5-dihydroxyphenylglycine (Dpg) responsible of the production of vancomycin and teicoplanin antibiotics. Catalyzes the unusual conversion 3,5-dihydroxyphenylacetyl-CoA (DPA-CoA) to 3,5-dihydroxyphenylglyoxylate. DpgC performed a net four-electron oxidation of the benzylic carbon of DPA-CoA and the hydrolysis of the thioester bond to generate free CoA. DpgC has the ability to process a diverse range of substituted phenylacetyl-CoA substrates. This chain is (3,5-dihydroxyphenyl)acetyl-CoA 1,2-dioxygenase, found in Streptomyces toyocaensis.